A 716-amino-acid polypeptide reads, in one-letter code: MKIGRDELVFETGFMAKQANGSVLATYGGSSVLATVCCSSNVREDLDFVPLSVEYNEKYYAAGKIPGGFIKREGKPKDKEILVSRLIDRPMRPLFDKRFGREIQVIPTTLATDQLNPPDIVGMNAAFTAVFLSDIPFNGPIAAVRMVYLNGKFIVNPSFEEIHDSDLDIVVAGSLNGITMVEGGANEVGEDILLSAIDGAHEYIKQICNAQKEFLDIVGKKEKLPLAFEEKIFEFKDELRDFVYADLKEACFVKGKLNRDKAITLLRNKSYEYFSSLEKLTDSNESLFHKAFDDFEKEIVRSSILNDNIRTDGRTPNEIRDIISEVDILSRTHGSALFTRGETQALAVTTLGTSIDEQIMDDIDGDKRLNFMLHYNFPPFSVGETGRLMTGRREIGHGHLAQRALESMVPGKNDFPYTIRVVSEVLESNGSSSMATVCAGSMSLMSAGVPVKGQVAGIAMGLISEGDKYVVLSDILGEEDHLGDMDFKVAGTKNGITGFQMDIKIENVTKDLMRDALEQARIGRIHILSIMNTVISNSRVGISKYAPKIVQLQIDIDKISLVIGSTGKTVKAITDEFEVKVQIEQNGKIILFGDDDFKMQKAKERIESIVREPKVGEIYEGTVKKINSFGAFIELTPAKEGFLSTRLKPRDSKYGSGRFGNSNRYSRFGGGGENIRGNAGLVRPPKLEEGQRIKVKIIDIDKFGKIDLEIVRDKDY.

Positions 480 and 486 each coordinate Mg(2+). The KH domain occupies 547 to 606 (PKIVQLQIDIDKISLVIGSTGKTVKAITDEFEVKVQIEQNGKIILFGDDDFKMQKAKERI). The S1 motif domain occupies 616–711 (GEIYEGTVKK…KFGKIDLEIV (96 aa)).

It belongs to the polyribonucleotide nucleotidyltransferase family. Mg(2+) serves as cofactor.

It localises to the cytoplasm. It carries out the reaction RNA(n+1) + phosphate = RNA(n) + a ribonucleoside 5'-diphosphate. Involved in mRNA degradation. Catalyzes the phosphorolysis of single-stranded polyribonucleotides processively in the 3'- to 5'-direction. In Borreliella burgdorferi (strain ATCC 35210 / DSM 4680 / CIP 102532 / B31) (Borrelia burgdorferi), this protein is Polyribonucleotide nucleotidyltransferase.